Consider the following 993-residue polypeptide: ATP-dependent DNA helicase MPH1 (993 aa).

The 168-residue stretch at 94 to 261 (IVHKSLFQNT…EVVNNLDISK (168 aa)) folds into the Helicase ATP-binding domain. 107-114 (IPTGMGKT) contributes to the ATP binding site. The DEAH box motif lies at 209 to 212 (DEAH). The 149-residue stretch at 507 to 655 (KVERLHRQEQ…CIDYKKSDRI (149 aa)) folds into the Helicase C-terminal domain. Residues 530-551 (NDKLERSARRTGSSEEAQISGM) form a disordered region. The segment covering 539–551 (RTGSSEEAQISGM) has biased composition (polar residues). Residues 751 to 810 (LVTSNENPSKKRKIFKALDNLENDSTEEASSSLETEDEEVSDDNNVFIAEGQNGCQKDLE) are FKH1-binding region. Phosphothreonine occurs at positions 776 and 785.

This sequence belongs to the DEAD box helicase family. DEAH subfamily. FANCM sub-subfamily. Interacts with the MHF histone-fold complex composed of MHF1 and MHF2 to form the FANCM-MHF complex. Interacts with FHK1. Phosphorylation at both Thr-776 and Thr-785 is required for the interaction with FKH1.

It is found in the nucleus. The catalysed reaction is ATP + H2O = ADP + phosphate + H(+). Functionally, ATP-dependent DNA helicase involved in DNA damage repair by homologous recombination and in genome maintenance. Capable of unwinding D-loops. Plays a role in limiting crossover recombinants during mitotic DNA double-strand break (DSB) repair. Prevents crossovers between ectopic sequences by removing substrates for MUS81-MMS4 or RAD1-RAD10 cleavage. Component of a FANCM-MHF complex which promotes gene conversion at blocked replication forks, probably by reversal of the stalled fork. Binds to flap-structured DNA but not to non-flap nicked DNA, and participates in Okazaki fragment processing by stimulating the endonuclease activities of FEN1 and DNA2. Involved in recombination donor preference during mating-type switching via interaction with FKH1. The polypeptide is ATP-dependent DNA helicase MPH1 (Saccharomyces cerevisiae (strain ATCC 204508 / S288c) (Baker's yeast)).